We begin with the raw amino-acid sequence, 276 residues long: Putative glycosyltransferase 6 domain-containing protein 1 (276 aa).

Residues 1–6 (MNSKRM) lie on the Cytoplasmic side of the membrane. A helical; Signal-anchor for type II membrane protein transmembrane segment spans residues 7-23 (LLLVLFAFSLMLVERYF). The Lumenal portion of the chain corresponds to 24-276 (RNHQVEELRL…NKYFYLNKPT (253 aa)). The N-linked (GlcNAc...) asparagine glycan is linked to asparagine 74. Substrate contacts are provided by residues 82–87 (FATGRF), 173–175 (AAN), and 195–198 (HAWW). Glutamate 263 functions as the Nucleophile in the catalytic mechanism.

Belongs to the glycosyltransferase 6 family. Mn(2+) serves as cofactor. In terms of tissue distribution, expressed in both healthy and inflamed gingival tissue samples at similar levels, with higher expression in the gingival connective tissue compared to gingival epithelium. Strongest expression in testis, followed by leukocytes.

It is found in the membrane. This Homo sapiens (Human) protein is Putative glycosyltransferase 6 domain-containing protein 1 (GLT6D1).